A 305-amino-acid chain; its full sequence is MTESDMSEQLRGDVDHPESGIDVVLVTGLSGAGRGTAAKVLEDLGWYVADNLPPELIARMVELGLAAGSRITQLAVVMDVRSRGFTGDLDWVRRDLATRNITPRVLFLEASDDILVRRYEQNRRSHPLQGDQTLAEGIARERALLAPVRASADLVIDTSKLSVHALRESVERAFGGEVVAETSATVESFGYKYGLPMDADIVMDVRFLPNPHWVDALRPHTGQHPDVRDYVLGQPGAEEFLDTYHRLLNVVIDGYRREGKRYMTVAIGCTGGKHRSVAIAEALAGRLQGGDELTVRVLHRDLGRE.

An ATP-binding site is contributed by 28–35; that stretch reads GLSGAGRG. 79 to 82 contributes to the GTP binding site; the sequence is DVRS.

Belongs to the RapZ-like family.

Displays ATPase and GTPase activities. This is Nucleotide-binding protein Mjls_2437 from Mycobacterium sp. (strain JLS).